The primary structure comprises 628 residues: tRNA uridine 5-carboxymethylaminomethyl modification enzyme MnmG (628 aa).

14-19 (GAGHAG) provides a ligand contact to FAD. 273-287 (GPRYCPSIEDKVVRF) lines the NAD(+) pocket.

The protein belongs to the MnmG family. In terms of assembly, homodimer. Heterotetramer of two MnmE and two MnmG subunits. FAD is required as a cofactor.

The protein resides in the cytoplasm. NAD-binding protein involved in the addition of a carboxymethylaminomethyl (cmnm) group at the wobble position (U34) of certain tRNAs, forming tRNA-cmnm(5)s(2)U34. This chain is tRNA uridine 5-carboxymethylaminomethyl modification enzyme MnmG, found in Bacillus velezensis (strain DSM 23117 / BGSC 10A6 / LMG 26770 / FZB42) (Bacillus amyloliquefaciens subsp. plantarum).